Consider the following 115-residue polypeptide: UPF0738 protein SAB0871 (115 aa).

Belongs to the UPF0738 family.

The chain is UPF0738 protein SAB0871 from Staphylococcus aureus (strain bovine RF122 / ET3-1).